The chain runs to 544 residues: CTP synthase (544 aa).

Residues 1–266 (MKKRFIFITG…DQIICHHFKL (266 aa)) form an amidoligase domain region. Ser14 serves as a coordination point for CTP. Ser14 contributes to the UTP binding site. ATP contacts are provided by residues 15–20 (SLGKGI) and Asp72. Residues Asp72 and Glu140 each contribute to the Mg(2+) site. CTP contacts are provided by residues 147-149 (DIE), 187-192 (KTKPTQ), and Lys223. UTP contacts are provided by residues 187–192 (KTKPTQ) and Lys223. Residues 291–541 (TIGIIGKYIK…IKAAIQYKKI (251 aa)) enclose the Glutamine amidotransferase type-1 domain. An L-glutamine-binding site is contributed by Gly352. Cys379 serves as the catalytic Nucleophile; for glutamine hydrolysis. Residues 380-383 (LGMQ), Glu403, and Arg469 each bind L-glutamine. Residues His514 and Glu516 contribute to the active site.

This sequence belongs to the CTP synthase family. As to quaternary structure, homotetramer.

It carries out the reaction UTP + L-glutamine + ATP + H2O = CTP + L-glutamate + ADP + phosphate + 2 H(+). The enzyme catalyses L-glutamine + H2O = L-glutamate + NH4(+). It catalyses the reaction UTP + NH4(+) + ATP = CTP + ADP + phosphate + 2 H(+). Its pathway is pyrimidine metabolism; CTP biosynthesis via de novo pathway; CTP from UDP: step 2/2. Allosterically activated by GTP, when glutamine is the substrate; GTP has no effect on the reaction when ammonia is the substrate. The allosteric effector GTP functions by stabilizing the protein conformation that binds the tetrahedral intermediate(s) formed during glutamine hydrolysis. Inhibited by the product CTP, via allosteric rather than competitive inhibition. In terms of biological role, catalyzes the ATP-dependent amination of UTP to CTP with either L-glutamine or ammonia as the source of nitrogen. Regulates intracellular CTP levels through interactions with the four ribonucleotide triphosphates. This Buchnera aphidicola subsp. Baizongia pistaciae (strain Bp) protein is CTP synthase.